The sequence spans 572 residues: Urease subunit alpha (572 aa).

The Urease domain maps to 132–572 (GGFDSHIHFI…LPMAQRYFMY (441 aa)). Residues histidine 137, histidine 139, and lysine 220 each contribute to the Ni(2+) site. An N6-carboxylysine modification is found at lysine 220. Histidine 222 contributes to the substrate binding site. Ni(2+) contacts are provided by histidine 249 and histidine 275. Histidine 323 (proton donor) is an active-site residue. Aspartate 363 contributes to the Ni(2+) binding site.

This sequence belongs to the metallo-dependent hydrolases superfamily. Urease alpha subunit family. Heterotrimer of UreA (gamma), UreB (beta) and UreC (alpha) subunits. Three heterotrimers associate to form the active enzyme. Ni cation is required as a cofactor. Post-translationally, carboxylation allows a single lysine to coordinate two nickel ions.

It is found in the cytoplasm. It catalyses the reaction urea + 2 H2O + H(+) = hydrogencarbonate + 2 NH4(+). It participates in nitrogen metabolism; urea degradation; CO(2) and NH(3) from urea (urease route): step 1/1. This Bradyrhizobium diazoefficiens (strain JCM 10833 / BCRC 13528 / IAM 13628 / NBRC 14792 / USDA 110) protein is Urease subunit alpha.